A 512-amino-acid chain; its full sequence is MTDQLIIFDTTLRDGEQSPGASMTRDEKMRIAKQLERLKVDVIEAGFPASSNGDFEAVKAIADIIKESTVCGLSRANDRDISRAAEALKGAARGRIHTFIATSPLHMEKKLRMSPDEVHEQAKLAVRFARNLVSDVEFSPEDGYRSDPDFLCRVLETVINEGATTINVPDTVGYAIPELYGNFIKMLRERVPNSDKAIWSVHCHNDLGMAVANSLAGVKIGGARQVECTINGLGERAGNCSLEEVVMAVKTRRDYFGLDLNIDTTHIVAASRMVSQTTGFVVQPNKAVVGANAFAHASGIHQDGVLKARDTYEIMRAEDVGWAANKIVLGKLSGRNAFKQRLQELGVTMASEADINAAFLRFKELADRKSEIFDEDILALVSAEEHSNVDEQFAFVSLSQHSETGERPQAKVVFTVQGKEVTGESDGNGPVDASLKAIESHVKSGAEMVLYSVNAISGSTESQGEVTVRLQNAGRVVNGVGADPDIVVASAKAYLSALNKLQSQAEKVAAQG.

Positions 5-268 (LIIFDTTLRD…DLNIDTTHIV (264 aa)) constitute a Pyruvate carboxyltransferase domain. Mn(2+) is bound by residues aspartate 14, histidine 202, histidine 204, and asparagine 239. The regulatory domain stretch occupies residues 394–512 (AFVSLSQHSE…SQAEKVAAQG (119 aa)).

It belongs to the alpha-IPM synthase/homocitrate synthase family. LeuA type 1 subfamily. In terms of assembly, homodimer. It depends on Mn(2+) as a cofactor.

It is found in the cytoplasm. The enzyme catalyses 3-methyl-2-oxobutanoate + acetyl-CoA + H2O = (2S)-2-isopropylmalate + CoA + H(+). It participates in amino-acid biosynthesis; L-leucine biosynthesis; L-leucine from 3-methyl-2-oxobutanoate: step 1/4. Catalyzes the condensation of the acetyl group of acetyl-CoA with 3-methyl-2-oxobutanoate (2-ketoisovalerate) to form 3-carboxy-3-hydroxy-4-methylpentanoate (2-isopropylmalate). In Variovorax paradoxus (strain S110), this protein is 2-isopropylmalate synthase.